Here is a 362-residue protein sequence, read N- to C-terminus: MLSRSVASAVTPVSSSSLLPNSKPIFCLKTLSGYRSSSFCGGCIRKINHKPLRMTSSNITPRAMATQQLENADQLIDSVETFIFDCDGVIWKGDKLIEGVPETLDMLRAKGKRLVFVTNNSTKSRKQYGKKFETLGLNVNEEEIFASSFAAAAYLQSINFPKDKKVYVIGEEGILKELELAGFQYLGGPDDGKRQIELKPGFLMEHDHDVGAVVVGFDRYFNYYKIQYGTLCIRENPGCLFIATNRDAVTHLTDAQEWAGGGSMVGALVGSTQREPLVVGKPSTFMMDYLADKFGIQKSQICMVGDRLDTDILFGQNGGCKTLLVLSGVTSISMLESPENKIQPDFYTSKISDFLSPKAATV.

Residues 1–54 (MLSRSVASAVTPVSSSSLLPNSKPIFCLKTLSGYRSSSFCGGCIRKINHKPLRM) constitute a chloroplast transit peptide. T55 carries the post-translational modification N-acetylthreonine. E80 functions as the Nucleophile in the catalytic mechanism. S356 carries the post-translational modification Phosphoserine.

It belongs to the HAD-like hydrolase superfamily. CbbY/CbbZ/Gph/YieH family.

The protein resides in the plastid. Its subcellular location is the chloroplast. It carries out the reaction 2-phosphoglycolate + H2O = glycolate + phosphate. Functionally, photorespiratory enzyme that dephosphorylates the 2-phosphoglycolate produced by the RuBisCO oxygenation reaction. This chain is Phosphoglycolate phosphatase 1B, chloroplastic (PGLP1B), found in Arabidopsis thaliana (Mouse-ear cress).